The primary structure comprises 321 residues: Ribosomal RNA small subunit methyltransferase H (321 aa).

S-adenosyl-L-methionine-binding positions include 40–42 (GGH), Asp60, Phe84, Asp106, and Gln113.

This sequence belongs to the methyltransferase superfamily. RsmH family.

The protein localises to the cytoplasm. It carries out the reaction cytidine(1402) in 16S rRNA + S-adenosyl-L-methionine = N(4)-methylcytidine(1402) in 16S rRNA + S-adenosyl-L-homocysteine + H(+). Its function is as follows. Specifically methylates the N4 position of cytidine in position 1402 (C1402) of 16S rRNA. This Haemophilus influenzae (strain ATCC 51907 / DSM 11121 / KW20 / Rd) protein is Ribosomal RNA small subunit methyltransferase H.